Here is a 406-residue protein sequence, read N- to C-terminus: Argininosuccinate synthase (406 aa).

Residues 13–21 (AYSGGLDTS) and Ala40 contribute to the ATP site. Positions 91 and 96 each coordinate L-citrulline. Position 121 (Gly121) interacts with ATP. The L-aspartate site is built by Thr123, Asn127, and Asp128. L-citrulline is bound at residue Asn127. Residues Arg131, Ser182, Ser191, Glu267, and Tyr279 each contribute to the L-citrulline site.

Belongs to the argininosuccinate synthase family. Type 1 subfamily. As to quaternary structure, homotetramer.

Its subcellular location is the cytoplasm. The enzyme catalyses L-citrulline + L-aspartate + ATP = 2-(N(omega)-L-arginino)succinate + AMP + diphosphate + H(+). It functions in the pathway amino-acid biosynthesis; L-arginine biosynthesis; L-arginine from L-ornithine and carbamoyl phosphate: step 2/3. The polypeptide is Argininosuccinate synthase (Brucella abortus (strain S19)).